The chain runs to 360 residues: Uptake hydrogenase small subunit (360 aa).

The tat-type signal signal peptide spans 1-46 (MATAETFYDVIRRQGITRRSFTKFCSLTAASLGFGPGAATAMAEAL). [4Fe-4S] cluster contacts are provided by Cys-62, Cys-65, Cys-160, Cys-194, His-232, Cys-235, Cys-260, and Cys-266. The [3Fe-4S] cluster site is built by Cys-275, Cys-294, and Cys-297.

It belongs to the [NiFe]/[NiFeSe] hydrogenase small subunit family. In terms of assembly, heterodimer of a large and a small subunit. Requires [4Fe-4S] cluster as cofactor. [3Fe-4S] cluster serves as cofactor. Predicted to be exported by the Tat system. The position of the signal peptide cleavage has not been experimentally proven.

The protein localises to the cell membrane. It carries out the reaction H2 + A = AH2. In terms of biological role, this enzyme recycles the H(2) produced by nitrogenase to increase the production of ATP and to protect nitrogenase against inhibition or damage by O(2) under carbon- or phosphate-limited conditions. This is Uptake hydrogenase small subunit (hupA) from Rhizobium leguminosarum bv. viciae.